Consider the following 736-residue polypeptide: Orphan sodium- and chloride-dependent neurotransmitter transporter NTT5 (736 aa).

Residues 1–138 are Cytoplasmic-facing; it reads MKTEAQPSTS…FAYLWLNSGG (138 aa). The next 3 helical transmembrane spans lie at 139 to 159, 177 to 197, and 199 to 219; these read CSFA…LLFL, IIAP…FILG, and YFNV…QFPV. At 220-263 the chain is on the extracellular side; sequence PWEKCPLTMNSSGFDPECERTTPSIYFWYQQALKASDRIEDGGS. N229 carries N-linked (GlcNAc...) asparagine glycosylation. The next 4 helical transmembrane spans lie at 264–284, 290–310, 338–358, and 383–403; these read PVYS…AFMI, TGKV…GFFI, VWSL…GSVA, and LTLL…ATVI. Topologically, residues 404 to 495 are extracellular; it reads THRCCERNAE…EAMSFLPPSV (92 aa). 5 consecutive transmembrane segments (helical) span residues 496 to 516, 534 to 554, 568 to 588, 609 to 629, and 659 to 679; these read FWSF…AIGI, HTKL…LFFT, YWIV…VSWA, IFGW…FVTM, and ALLL…AYFV. The Cytoplasmic segment spans residues 680–736; the sequence is YCRIHRIPFRPKSGDGPMTASTSLPLSHQLTPSKEVQKEEILQVDETKYPSTCNVTS.

Belongs to the sodium:neurotransmitter symporter (SNF) (TC 2.A.22) family. SLC6A16 subfamily. As to expression, highly expressed in peripheral tissues, particularly in testis, pancreas, and prostate.

The protein resides in the membrane. In Homo sapiens (Human), this protein is Orphan sodium- and chloride-dependent neurotransmitter transporter NTT5 (SLC6A16).